The chain runs to 228 residues: MTQQEIKLIAFDLDGTLLDSVPDLAVAADQATRAVGFPGVTELQVRDYVGNGADILIGRALSQSLTINPELSDELRAQARELFDDFYQQTGHKLSHLYPTVKETLKELHQAGFTLALVTNKPSKFVPDVLQQHGIADYFVDVLGGDSFPEKKPNPIALNWLMEKHQIQPTEMLMVGDSKNDILAAKNAGCASFGLTYGYNHGEPIAASEPDFVADSLAQLLDVVLVSA.

The Nucleophile role is filled by Asp12. Residues Asp12, Asp14, and Asp177 each coordinate Mg(2+).

It belongs to the HAD-like hydrolase superfamily. CbbY/CbbZ/Gph/YieH family. It depends on Mg(2+) as a cofactor.

The catalysed reaction is 2-phosphoglycolate + H2O = glycolate + phosphate. The protein operates within organic acid metabolism; glycolate biosynthesis; glycolate from 2-phosphoglycolate: step 1/1. Functionally, specifically catalyzes the dephosphorylation of 2-phosphoglycolate. Is involved in the dissimilation of the intracellular 2-phosphoglycolate formed during the DNA repair of 3'-phosphoglycolate ends, a major class of DNA lesions induced by oxidative stress. The protein is Phosphoglycolate phosphatase of Vibrio vulnificus (strain CMCP6).